The following is a 489-amino-acid chain: N-succinylglutamate 5-semialdehyde dehydrogenase (489 aa).

223–228 (GSSRTG) provides a ligand contact to NAD(+). Catalysis depends on residues Glu246 and Cys280.

Belongs to the aldehyde dehydrogenase family. AstD subfamily.

It carries out the reaction N-succinyl-L-glutamate 5-semialdehyde + NAD(+) + H2O = N-succinyl-L-glutamate + NADH + 2 H(+). Its pathway is amino-acid degradation; L-arginine degradation via AST pathway; L-glutamate and succinate from L-arginine: step 4/5. Functionally, catalyzes the NAD-dependent reduction of succinylglutamate semialdehyde into succinylglutamate. The chain is N-succinylglutamate 5-semialdehyde dehydrogenase from Aeromonas hydrophila subsp. hydrophila (strain ATCC 7966 / DSM 30187 / BCRC 13018 / CCUG 14551 / JCM 1027 / KCTC 2358 / NCIMB 9240 / NCTC 8049).